Here is a 235-residue protein sequence, read N- to C-terminus: NAD(P)H-hydrate epimerase (235 aa).

The YjeF N-terminal domain maps to 18-221 (AAQIDEQLFT…SLVDEHELLM (204 aa)). 65 to 69 (NNGGD) serves as a coordination point for (6S)-NADPHX. Residues asparagine 66 and aspartate 127 each contribute to the K(+) site. (6S)-NADPHX contacts are provided by residues 131-137 (GFSFHPP) and aspartate 160. Serine 163 contributes to the K(+) binding site.

It belongs to the NnrE/AIBP family. It depends on K(+) as a cofactor.

The catalysed reaction is (6R)-NADHX = (6S)-NADHX. It catalyses the reaction (6R)-NADPHX = (6S)-NADPHX. Its function is as follows. Catalyzes the epimerization of the S- and R-forms of NAD(P)HX, a damaged form of NAD(P)H that is a result of enzymatic or heat-dependent hydration. This is a prerequisite for the S-specific NAD(P)H-hydrate dehydratase to allow the repair of both epimers of NAD(P)HX. This Caenorhabditis elegans protein is NAD(P)H-hydrate epimerase.